The sequence spans 110 residues: U1-lycotoxin-Ls1hh (110 aa).

An N-terminal signal peptide occupies residues 1–20 (MKFVLLFGVLLVTLFSYSSA). Residues 21 to 44 (EMLDDFDQADEDELLSLIEKEEAR) constitute a propeptide that is removed on maturation. 4 disulfides stabilise this stretch: cysteine 47–cysteine 62, cysteine 54–cysteine 71, cysteine 61–cysteine 89, and cysteine 73–cysteine 87.

It belongs to the neurotoxin 19 (CSTX) family. 03 subfamily. Expressed by the venom gland.

It is found in the secreted. The chain is U1-lycotoxin-Ls1hh from Lycosa singoriensis (Wolf spider).